A 406-amino-acid chain; its full sequence is Protrudin (406 aa).

Over 1-71 (MQAAERDGVA…AAEGVRALLR (71 aa)) the chain is Cytoplasmic. The tract at residues 1-97 (MQAAERDGVA…LLLTLDQAAW (97 aa)) is sufficient for homooligomerization. The sufficient for localization to endoplasmic reticulum tubular network stretch occupies residues 1 to 210 (MQAAERDGVA…LYLLPLCWVM (210 aa)). Residues 72-92 (WQRPLCSLLVCLGLNFLLLTL) form a helical membrane-spanning segment. Position 93 (Asp93) is a topological domain, lumenal. Residues 94–114 (QAAWYSVLALLVLLPALLGYL) form a helical membrane-spanning segment. Residues 115–192 (QETYRVRPSE…NPTVSSQFYG (78 aa)) are Cytoplasmic-facing. Positions 193–213 (ALLGSVCILYLLPLCWVMAIL) form an intramembrane region, helical. Residues 214-406 (NSTLFLGNSQ…CAQCNQMLIK (193 aa)) lie on the Cytoplasmic side of the membrane. A disordered region spans residues 239–295 (LGTKPLESAPEPAKPLPTDAPPDRTPTPTSTEDLTPGSVEEAEEAEPDEEFKDAIEE). Positions 250 to 263 (PAKPLPTDAPPDRT) are enriched in pro residues. A compositionally biased stretch (acidic residues) spans 278-295 (EEAEEAEPDEEFKDAIEE). The segment at 339–405 (SNNFGTCTGC…VCAQCNQMLI (67 aa)) adopts an FYVE-type zinc-finger fold. Positions 345, 348, 361, 364, 369, 372, 397, and 400 each coordinate Zn(2+).

Can form homooligomers (monomers, dimers and tetramers).

It is found in the recycling endosome membrane. It localises to the endoplasmic reticulum membrane. Its subcellular location is the cell projection. The protein localises to the growth cone membrane. Its function is as follows. Key regulator of RAB11-dependent vesicular trafficking during neurite extension through polarized membrane transport. Promotes axonal elongation and contributes to the establishment of neuronal cell polarity. Involved in nerve growth factor-induced neurite formation in VAPA-dependent manner. Contributes to both the formation and stabilization of the tubular ER network. Involved in ER morphogenesis by regulating the sheet-to-tubule balance and possibly the density of tubule interconnections. This chain is Protrudin (ZFYVE27), found in Gallus gallus (Chicken).